The chain runs to 258 residues: MLAKRIIPCLDVRDGQVVKGVQFRNHEIIGDIVPLAKRYAEEGADELVFYDITASSDGRVVDKSWVSRVAEVIDIPFCVAGGIKSLDDAAKILSFGADKISINSPALADPTLITRLADRFGVQCIVVGIDTWYDAETGKYHVNQYTGDESRTRVTQWETLEWVQEVQKRGAGEIVLNMMNQDGVRNGYDLEQLKKVREVCHVPLIASGGAGTMEHFLEAFRDADVDGALAASVFHKQIINIGELKAYLATQGVEIRIC.

Catalysis depends on residues aspartate 11 and aspartate 130.

Belongs to the HisA/HisF family. As to quaternary structure, heterodimer of HisH and HisF.

Its subcellular location is the cytoplasm. It catalyses the reaction 5-[(5-phospho-1-deoxy-D-ribulos-1-ylimino)methylamino]-1-(5-phospho-beta-D-ribosyl)imidazole-4-carboxamide + L-glutamine = D-erythro-1-(imidazol-4-yl)glycerol 3-phosphate + 5-amino-1-(5-phospho-beta-D-ribosyl)imidazole-4-carboxamide + L-glutamate + H(+). It functions in the pathway amino-acid biosynthesis; L-histidine biosynthesis; L-histidine from 5-phospho-alpha-D-ribose 1-diphosphate: step 5/9. IGPS catalyzes the conversion of PRFAR and glutamine to IGP, AICAR and glutamate. The HisF subunit catalyzes the cyclization activity that produces IGP and AICAR from PRFAR using the ammonia provided by the HisH subunit. The sequence is that of Imidazole glycerol phosphate synthase subunit HisF from Escherichia fergusonii (strain ATCC 35469 / DSM 13698 / CCUG 18766 / IAM 14443 / JCM 21226 / LMG 7866 / NBRC 102419 / NCTC 12128 / CDC 0568-73).